The chain runs to 520 residues: Bifunctional purine biosynthesis protein PurH (520 aa).

In terms of domain architecture, MGS-like spans Met-1 to Val-147.

This sequence belongs to the PurH family.

The enzyme catalyses (6R)-10-formyltetrahydrofolate + 5-amino-1-(5-phospho-beta-D-ribosyl)imidazole-4-carboxamide = 5-formamido-1-(5-phospho-D-ribosyl)imidazole-4-carboxamide + (6S)-5,6,7,8-tetrahydrofolate. It catalyses the reaction IMP + H2O = 5-formamido-1-(5-phospho-D-ribosyl)imidazole-4-carboxamide. The protein operates within purine metabolism; IMP biosynthesis via de novo pathway; 5-formamido-1-(5-phospho-D-ribosyl)imidazole-4-carboxamide from 5-amino-1-(5-phospho-D-ribosyl)imidazole-4-carboxamide (10-formyl THF route): step 1/1. It functions in the pathway purine metabolism; IMP biosynthesis via de novo pathway; IMP from 5-formamido-1-(5-phospho-D-ribosyl)imidazole-4-carboxamide: step 1/1. The protein is Bifunctional purine biosynthesis protein PurH of Citrifermentans bemidjiense (strain ATCC BAA-1014 / DSM 16622 / JCM 12645 / Bem) (Geobacter bemidjiensis).